The primary structure comprises 65 residues: Large ribosomal subunit protein bL28 (65 aa).

It belongs to the bacterial ribosomal protein bL28 family.

The protein is Large ribosomal subunit protein bL28 of Pseudothermotoga lettingae (strain ATCC BAA-301 / DSM 14385 / NBRC 107922 / TMO) (Thermotoga lettingae).